A 132-amino-acid polypeptide reads, in one-letter code: uncharacterized protein (132 aa).

Positions 1 to 17 (MCPECFFLMLFFCGYRA) are cleaved as a signal peptide. The span at 25-39 (SSSSSSSSSSSFRSS) shows a compositional bias: low complexity. The interval 25 to 79 (SSSSSSSSSSSFRSSPAYGFSGRPPGGAGCRERSQRSCLRPGGLPSLTRNPGLQR) is disordered.

This is an uncharacterized protein from Escherichia coli (strain K12).